The following is a 409-amino-acid chain: Phosphatidylserine decarboxylase proenzyme, mitochondrial (409 aa).

The transit peptide at 1–52 directs the protein to the mitochondrion; sequence MATSVGHRCLGLLHGVAPWRSSLHPCEITALSQSLQPLRKLPFRAFRTDARK. Residues 53–63 are Mitochondrial matrix-facing; that stretch reads IHTAPARTMFL. A helical membrane pass occupies residues 64–82; the sequence is LRPVPILLATGGGYAGYRQ. Residues 83–409 lie on the Mitochondrial intermembrane side of the membrane; sequence YEKYRERELE…IRFGEALGSL (327 aa). Catalysis depends on charge relay system; for autoendoproteolytic cleavage activity residues aspartate 191, histidine 267, and serine 378. Catalysis depends on serine 378, which acts as the Schiff-base intermediate with substrate; via pyruvic acid; for decarboxylase activity. Residue serine 378 is modified to Pyruvic acid (Ser); by autocatalysis.

The protein belongs to the phosphatidylserine decarboxylase family. PSD-B subfamily. Eukaryotic type I sub-subfamily. As to quaternary structure, heterodimer of a large membrane-associated beta subunit and a small pyruvoyl-containing alpha subunit. The cofactor is pyruvate. Post-translationally, is synthesized initially as an inactive proenzyme. Formation of the active enzyme involves a self-maturation process in which the active site pyruvoyl group is generated from an internal serine residue via an autocatalytic post-translational modification. Two non-identical subunits are generated from the proenzyme in this reaction, and the pyruvate is formed at the N-terminus of the alpha chain, which is derived from the carboxyl end of the proenzyme. The autoendoproteolytic cleavage occurs by a canonical serine protease mechanism, in which the side chain hydroxyl group of the serine supplies its oxygen atom to form the C-terminus of the beta chain, while the remainder of the serine residue undergoes an oxidative deamination to produce ammonia and the pyruvoyl prosthetic group on the alpha chain. During this reaction, the Ser that is part of the protease active site of the proenzyme becomes the pyruvoyl prosthetic group, which constitutes an essential element of the active site of the mature decarboxylase.

The protein localises to the mitochondrion inner membrane. Its subcellular location is the lipid droplet. It is found in the cytoplasm. It carries out the reaction a 1,2-diacyl-sn-glycero-3-phospho-L-serine + H(+) = a 1,2-diacyl-sn-glycero-3-phosphoethanolamine + CO2. Its pathway is phospholipid metabolism; phosphatidylethanolamine biosynthesis. Catalyzes the formation of phosphatidylethanolamine (PtdEtn) from phosphatidylserine (PtdSer). Plays a central role in phospholipid metabolism and in the interorganelle trafficking of phosphatidylserine. May be involved in lipid droplet biogenesis at the endoplasmic reticulum membrane. The sequence is that of Phosphatidylserine decarboxylase proenzyme, mitochondrial from Pongo abelii (Sumatran orangutan).